The chain runs to 131 residues: Small ribosomal subunit protein uS11 (131 aa).

This sequence belongs to the universal ribosomal protein uS11 family. In terms of assembly, part of the 30S ribosomal subunit. Interacts with proteins S7 and S18. Binds to IF-3.

In terms of biological role, located on the platform of the 30S subunit, it bridges several disparate RNA helices of the 16S rRNA. Forms part of the Shine-Dalgarno cleft in the 70S ribosome. The sequence is that of Small ribosomal subunit protein uS11 from Bacillus pumilus (strain SAFR-032).